The sequence spans 419 residues: Gamma-glutamyl phosphate reductase (419 aa).

Belongs to the gamma-glutamyl phosphate reductase family.

The protein localises to the cytoplasm. It carries out the reaction L-glutamate 5-semialdehyde + phosphate + NADP(+) = L-glutamyl 5-phosphate + NADPH + H(+). It participates in amino-acid biosynthesis; L-proline biosynthesis; L-glutamate 5-semialdehyde from L-glutamate: step 2/2. Functionally, catalyzes the NADPH-dependent reduction of L-glutamate 5-phosphate into L-glutamate 5-semialdehyde and phosphate. The product spontaneously undergoes cyclization to form 1-pyrroline-5-carboxylate. This is Gamma-glutamyl phosphate reductase from Caldicellulosiruptor bescii (strain ATCC BAA-1888 / DSM 6725 / KCTC 15123 / Z-1320) (Anaerocellum thermophilum).